Reading from the N-terminus, the 43-residue chain is Cytochrome b559 subunit beta (43 aa).

The chain crosses the membrane as a helical span at residues 18–34 (WLAVHGLAIPTVFFLGG). Residue His-22 coordinates heme.

The protein belongs to the PsbE/PsbF family. As to quaternary structure, heterodimer of an alpha subunit and a beta subunit. PSII is composed of 1 copy each of membrane proteins PsbA, PsbB, PsbC, PsbD, PsbE, PsbF, PsbH, PsbI, PsbJ, PsbK, PsbL, PsbM, PsbT, PsbX, PsbY, PsbZ, Psb30/Ycf12, at least 3 peripheral proteins of the oxygen-evolving complex and a large number of cofactors. It forms dimeric complexes. Requires heme b as cofactor.

It is found in the plastid. The protein localises to the chloroplast thylakoid membrane. In terms of biological role, this b-type cytochrome is tightly associated with the reaction center of photosystem II (PSII). PSII is a light-driven water:plastoquinone oxidoreductase that uses light energy to abstract electrons from H(2)O, generating O(2) and a proton gradient subsequently used for ATP formation. It consists of a core antenna complex that captures photons, and an electron transfer chain that converts photonic excitation into a charge separation. The chain is Cytochrome b559 subunit beta from Thalassiosira pseudonana (Marine diatom).